We begin with the raw amino-acid sequence, 422 residues long: Histidine--tRNA ligase (422 aa).

This sequence belongs to the class-II aminoacyl-tRNA synthetase family. In terms of assembly, homodimer.

Its subcellular location is the cytoplasm. It catalyses the reaction tRNA(His) + L-histidine + ATP = L-histidyl-tRNA(His) + AMP + diphosphate + H(+). This Vibrio cholerae serotype O1 (strain ATCC 39541 / Classical Ogawa 395 / O395) protein is Histidine--tRNA ligase.